Here is a 602-residue protein sequence, read N- to C-terminus: Spermidine-citrate ligase (602 aa).

Residues 286–288 (SLR), Lys300, and Arg312 each bind ATP.

This sequence belongs to the IucA/IucC family.

The enzyme catalyses spermidine + citrate + ATP = N(8)-citryl-spermidine + AMP + diphosphate + H(+). Its pathway is siderophore biosynthesis; petrobactin biosynthesis. In terms of biological role, involved in the biosynthesis of petrobactin, a catecholate siderophore that functions in both iron acquisition and virulence. Catalyzes the ATP-dependent condensation of citric acid and spermidine to form N(8)-citryl-spermidine. It can also catalyze the condensation of several di- and triamine analogs of spermidine with citric acid and the condensation of the citric acid analog tricarballylic acid with spermidine. Required for growth in iron-depleted medium and for full virulence in a mouse model of infection. This Bacillus anthracis protein is Spermidine-citrate ligase.